A 298-amino-acid polypeptide reads, in one-letter code: Probable aspartoacylase (298 aa).

Residues His13 and Glu16 each contribute to the Zn(2+) site. Substrate-binding positions include Arg54 and 61-62 (NR). His103 contacts Zn(2+). Substrate contacts are provided by Glu161 and Tyr271.

The protein belongs to the AspA/AstE family. Aspartoacylase subfamily. It depends on Zn(2+) as a cofactor.

The catalysed reaction is an N-acyl-L-aspartate + H2O = a carboxylate + L-aspartate. The sequence is that of Probable aspartoacylase from Prochlorococcus marinus (strain MIT 9515).